Consider the following 155-residue polypeptide: MAIKTNEGKLIASGLKFGVVVARFNEFISSKLLGGVIDGLIRHGASEEDIEISWVPGAFEIPLVAQKMANSKKFDAIICIGAVIRGSTPHFDYVANEMSKGIAKVSLDTGIPIAFGVLTTDTIEQAIERAGTKVGNKGYDAAVTAIEMANLLKMI.

Residues phenylalanine 24, 58–60 (AFE), and 82–84 (AVI) contribute to the 5-amino-6-(D-ribitylamino)uracil site. (2S)-2-hydroxy-3-oxobutyl phosphate is bound at residue 87–88 (ST). Residue histidine 90 is the Proton donor of the active site. Phenylalanine 115 provides a ligand contact to 5-amino-6-(D-ribitylamino)uracil. Arginine 129 contacts (2S)-2-hydroxy-3-oxobutyl phosphate.

This sequence belongs to the DMRL synthase family.

It carries out the reaction (2S)-2-hydroxy-3-oxobutyl phosphate + 5-amino-6-(D-ribitylamino)uracil = 6,7-dimethyl-8-(1-D-ribityl)lumazine + phosphate + 2 H2O + H(+). The protein operates within cofactor biosynthesis; riboflavin biosynthesis; riboflavin from 2-hydroxy-3-oxobutyl phosphate and 5-amino-6-(D-ribitylamino)uracil: step 1/2. In terms of biological role, catalyzes the formation of 6,7-dimethyl-8-ribityllumazine by condensation of 5-amino-6-(D-ribitylamino)uracil with 3,4-dihydroxy-2-butanone 4-phosphate. This is the penultimate step in the biosynthesis of riboflavin. The chain is 6,7-dimethyl-8-ribityllumazine synthase from Acetivibrio thermocellus (strain ATCC 27405 / DSM 1237 / JCM 9322 / NBRC 103400 / NCIMB 10682 / NRRL B-4536 / VPI 7372) (Clostridium thermocellum).